A 102-amino-acid chain; its full sequence is NADH-quinone oxidoreductase subunit K (102 aa).

The next 3 membrane-spanning stretches (helical) occupy residues 5 to 25, 30 to 50, and 63 to 83; these read ALTG…FGVL, ILFQ…AFIA, and MFVL…ALFL.

This sequence belongs to the complex I subunit 4L family. As to quaternary structure, NDH-1 is composed of 14 different subunits. Subunits NuoA, H, J, K, L, M, N constitute the membrane sector of the complex.

The protein resides in the cell inner membrane. It catalyses the reaction a quinone + NADH + 5 H(+)(in) = a quinol + NAD(+) + 4 H(+)(out). Functionally, NDH-1 shuttles electrons from NADH, via FMN and iron-sulfur (Fe-S) centers, to quinones in the respiratory chain. The immediate electron acceptor for the enzyme in this species is believed to be ubiquinone. Couples the redox reaction to proton translocation (for every two electrons transferred, four hydrogen ions are translocated across the cytoplasmic membrane), and thus conserves the redox energy in a proton gradient. In Rhodopseudomonas palustris (strain BisB18), this protein is NADH-quinone oxidoreductase subunit K.